A 218-amino-acid chain; its full sequence is Deoxyribose-phosphate aldolase (218 aa).

The Proton donor/acceptor role is filled by aspartate 92. The Schiff-base intermediate with acetaldehyde role is filled by lysine 155. Lysine 184 (proton donor/acceptor) is an active-site residue.

Belongs to the DeoC/FbaB aldolase family. DeoC type 1 subfamily.

The protein resides in the cytoplasm. The enzyme catalyses 2-deoxy-D-ribose 5-phosphate = D-glyceraldehyde 3-phosphate + acetaldehyde. It participates in carbohydrate degradation; 2-deoxy-D-ribose 1-phosphate degradation; D-glyceraldehyde 3-phosphate and acetaldehyde from 2-deoxy-alpha-D-ribose 1-phosphate: step 2/2. In terms of biological role, catalyzes a reversible aldol reaction between acetaldehyde and D-glyceraldehyde 3-phosphate to generate 2-deoxy-D-ribose 5-phosphate. The polypeptide is Deoxyribose-phosphate aldolase (Clostridium kluyveri (strain NBRC 12016)).